The chain runs to 348 residues: Methylthioribose-1-phosphate isomerase (348 aa).

Substrate-binding positions include 51–53 (RGA), R94, and Q199. The active-site Proton donor is the D240. Position 250 to 251 (250 to 251 (NK)) interacts with substrate.

It belongs to the eIF-2B alpha/beta/delta subunits family. MtnA subfamily.

The catalysed reaction is 5-(methylsulfanyl)-alpha-D-ribose 1-phosphate = 5-(methylsulfanyl)-D-ribulose 1-phosphate. It participates in amino-acid biosynthesis; L-methionine biosynthesis via salvage pathway; L-methionine from S-methyl-5-thio-alpha-D-ribose 1-phosphate: step 1/6. Functionally, catalyzes the interconversion of methylthioribose-1-phosphate (MTR-1-P) into methylthioribulose-1-phosphate (MTRu-1-P). In Nitrosococcus oceani (strain ATCC 19707 / BCRC 17464 / JCM 30415 / NCIMB 11848 / C-107), this protein is Methylthioribose-1-phosphate isomerase.